Here is a 201-residue protein sequence, read N- to C-terminus: Glycerol-3-phosphate acyltransferase (201 aa).

5 helical membrane passes run 9 to 29, 60 to 80, 86 to 106, 116 to 136, and 153 to 173; these read LTLI…FGLI, LAAA…LVAS, AAIG…WIGF, LGVL…VWIV, and IVVP…LFAI.

Belongs to the PlsY family. In terms of assembly, probably interacts with PlsX.

It is found in the cell inner membrane. The catalysed reaction is an acyl phosphate + sn-glycerol 3-phosphate = a 1-acyl-sn-glycero-3-phosphate + phosphate. It functions in the pathway lipid metabolism; phospholipid metabolism. Functionally, catalyzes the transfer of an acyl group from acyl-phosphate (acyl-PO(4)) to glycerol-3-phosphate (G3P) to form lysophosphatidic acid (LPA). This enzyme utilizes acyl-phosphate as fatty acyl donor, but not acyl-CoA or acyl-ACP. The sequence is that of Glycerol-3-phosphate acyltransferase from Brucella anthropi (strain ATCC 49188 / DSM 6882 / CCUG 24695 / JCM 21032 / LMG 3331 / NBRC 15819 / NCTC 12168 / Alc 37) (Ochrobactrum anthropi).